Here is a 931-residue protein sequence, read N- to C-terminus: Myocardin-related transcription factor A (931 aa).

The mediates interaction with SCAI and ACTB stretch occupies residues 1–256 (MPPLKSPAAF…KQDRGAPPMD (256 aa)). A Phosphoserine modification is found at serine 6. The segment at 6-23 (SPAAFHEQRRSLERARTE) is intervening spacer sequence 1. The stretch at 24 to 49 (DYLKRKIRSRPERSELVRMHILEETS) is one RPEL 1 repeat. A Bipartite Nuclear localization signal motif is present at residues 27–65 (KRKIRSRPERSELVRMHILEETSAEPSLQAKQLKLKRAR). Residues 50–67 (AEPSLQAKQLKLKRARLA) form an intervening spacer sequence 2 region. One copy of the RPEL 2 repeat lies at 68 to 93 (DDLNEKIAQRPGPMELVEKNILPVES). Disordered regions lie at residues 110 to 256 (ADSS…PPMD) and 290 to 344 (PAPP…GALP). 3 positions are modified to phosphoserine: serine 124, serine 139, and serine 156. Polar residues predominate over residues 151-162 (SATSASPTQVVS). Over residues 180 to 189 (PPLPPPPLLP) the composition is skewed to pro residues. A compositionally biased stretch (polar residues) spans 191 to 215 (SLTNGTTIPTAKSTPTLIKQSQPKS). Residues 216–231 (ASEKSQRSKKAKELKP) show a composition bias toward basic and acidic residues. Threonine 305 is modified (phosphothreonine). 2 positions are modified to phosphoserine: serine 310 and serine 312. The span at 310-320 (SLSTTNSSSSS) shows a compositional bias: low complexity. Threonine 313 is subject to Phosphothreonine. A phosphoserine mark is found at serine 317, serine 320, and serine 333. The 35-residue stretch at 347 to 381 (LDDMKVAELKQELKLRSLPVSGTKTELIERLRAYQ) folds into the SAP domain. A phosphoserine mark is found at serine 385 and serine 446. The interval 444-476 (FGSTGSTPPVSPTPSERSLLSTGDENSTPGDTF) is disordered. Threonine 447 is subject to Phosphothreonine. Position 449 is a phosphoserine (serine 449). Residue threonine 450 is modified to Phosphothreonine. Position 454 is a phosphoserine (serine 454). Threonine 456 is modified (phosphothreonine). At serine 458 the chain carries Phosphoserine. The span at 459 to 473 (ERSLLSTGDENSTPG) shows a compositional bias: polar residues. A phosphoserine mark is found at serine 482, serine 492, serine 507, and serine 511. Residues 515–563 (RAELEGRDKDQMLQEKDKQIEALTRMLRQKQQLVERLKLQLEQEKRAQQ) are a coiled coil. Disordered regions lie at residues 558 to 577 (EKRAQQPAPAPAPLGTPVKQ), 674 to 746 (KNAD…SSSQ), and 763 to 816 (ADFK…RLED). Low complexity predominate over residues 678 to 694 (SPGLSSGSPQQPSSQPG). Phosphoserine occurs at positions 685, 691, and 695. The segment covering 732–746 (MSQQPKQQENGSSSQ) has biased composition (polar residues). Residues 763–778 (ADFKEPPSLPGKEKPS) are compositionally biased toward basic and acidic residues. Over residues 784-799 (GSPLAAQPSPSAELPQ) the composition is skewed to low complexity. Serine 792, serine 807, and serine 859 each carry phosphoserine.

In terms of assembly, interacts with SRF, forming the SRF-MRTFA nuclear complex which binds the 5'-CArG-3' consensus motif (CArG box) on DNA via SRF. Interacts (via RPEL repeats) with globular actin (G-actin), thereby regulating its subcellular location and activity of the complex formed with SRF. Either forms a trivalent (by binding three G-actin monomers) or pentavalent (by binding five G-actin monomers) complex with G-actin. Forms a nuclear ternary complex with SCAI and SRF, leading to suppress MRTFA-induced SRF transcriptional activity. Interacts with beta-actin (ACTB); interaction with ACTB prevents interaction with SCAI. Interacts with MRTFB. In terms of processing, phosphorylation at Ser-6 by Erk inhibits binding of globular actin (G-actin), unmasking the nuclear localization signal (NLS) and promoting nuclear import. Ubiquitously expressed, has been detected in lung, placenta, small intestine, liver, kidney, spleen, thymus, colon, muscle, heart and brain. Expressed in peripheral blood mononuclear cells (at protein level).

It localises to the cytoplasm. The protein localises to the nucleus. Functionally, transcription coactivator that associates with the serum response factor (SRF) transcription factor to control expression of genes regulating the cytoskeleton during development, morphogenesis and cell migration. The SRF-MRTFA complex activity responds to Rho GTPase-induced changes in cellular globular actin (G-actin) concentration, thereby coupling cytoskeletal gene expression to cytoskeletal dynamics. MRTFA binds G-actin via its RPEL repeats, regulating activity of the MRTFA-SRF complex. Activity is also regulated by filamentous actin (F-actin) in the nucleus. This is Myocardin-related transcription factor A from Homo sapiens (Human).